Consider the following 156-residue polypeptide: Mediator of RNA polymerase II transcription subunit 28 (156 aa).

The disordered stretch occupies residues 1–38 (MDYQQKPPQSSDPSPSPPDRPPGIRSPETPSNNQNNDI). Residues 104–156 (PSRAESLKKDIAVMEEELKTKDELIKKHMRLFQESQKLVKEQIEKHRDELEKV) adopt a coiled-coil conformation.

This sequence belongs to the Mediator complex subunit 28 family. As to quaternary structure, dimers. Component of the Mediator complex. Interacts with GEBPL.

The protein localises to the nucleus. Its function is as follows. Component of the Mediator complex, a coactivator involved in the regulated transcription of nearly all RNA polymerase II-dependent genes. Mediator functions as a bridge to convey information from gene-specific regulatory proteins to the basal RNA polymerase II transcription machinery. The Mediator complex, having a compact conformation in its free form, is recruited to promoters by direct interactions with regulatory proteins and serves for the assembly of a functional pre-initiation complex with RNA polymerase II and the general transcription factors. This Arabidopsis thaliana (Mouse-ear cress) protein is Mediator of RNA polymerase II transcription subunit 28.